A 102-amino-acid polypeptide reads, in one-letter code: Citrate lyase acyl carrier protein (102 aa).

At serine 14 the chain carries O-(phosphoribosyl dephospho-coenzyme A)serine.

Belongs to the CitD family. In terms of assembly, oligomer with a subunit composition of (alpha,beta,gamma)6.

It localises to the cytoplasm. Functionally, covalent carrier of the coenzyme of citrate lyase. The sequence is that of Citrate lyase acyl carrier protein from Streptococcus pyogenes serotype M2 (strain MGAS10270).